A 190-amino-acid polypeptide reads, in one-letter code: MILPINTYSDEVLHQKAKPLKGVDADISSLIDSMFESMENASGIGLAAPQVGCSIRLLVLDVSCMKSYEDVPPMVVINPNVLAVRGKNLMEEGCLSVPGVQGDVLRPSEITLKYRDRNFQEHTEEFSGMLARVLQHEIDHLNGTLFVDRMEKRDRRRIQQELDDIAAGLVPADYPIARECSRGGEGPACM.

Fe cation-binding residues include Cys94 and His136. The active site involves Glu137. A Fe cation-binding site is contributed by His140.

This sequence belongs to the polypeptide deformylase family. The cofactor is Fe(2+).

It catalyses the reaction N-terminal N-formyl-L-methionyl-[peptide] + H2O = N-terminal L-methionyl-[peptide] + formate. In terms of biological role, removes the formyl group from the N-terminal Met of newly synthesized proteins. Requires at least a dipeptide for an efficient rate of reaction. N-terminal L-methionine is a prerequisite for activity but the enzyme has broad specificity at other positions. In Chlorobium luteolum (strain DSM 273 / BCRC 81028 / 2530) (Pelodictyon luteolum), this protein is Peptide deformylase.